Reading from the N-terminus, the 377-residue chain is Carboxynorspermidine/carboxyspermidine decarboxylase (377 aa).

Residue Lys-41 is modified to N6-(pyridoxal phosphate)lysine. Residues Glu-238 and Asp-274 each coordinate substrate.

Belongs to the Orn/Lys/Arg decarboxylase class-II family. NspC subfamily. In terms of assembly, homodimer. It depends on pyridoxal 5'-phosphate as a cofactor.

The protein resides in the cytoplasm. It catalyses the reaction carboxynorspermidine + H(+) = norspermidine + CO2. It carries out the reaction carboxyspermidine + H(+) = spermidine + CO2. Catalyzes the decarboxylation of carboxynorspermidine and carboxyspermidine. Carboxynorspermidine is decarboxylated 20-fold more efficiently than carboxyspermidine. Exhibits some activity with L-ornithine, but shows no activity with L-arginine, L-lysine or meso-diaminopimelate. The polypeptide is Carboxynorspermidine/carboxyspermidine decarboxylase (Vibrio vulnificus (strain CMCP6)).